The sequence spans 1809 residues: Pyochelin synthetase PchF (1809 aa).

A condensation/cyclization region spans residues 69 to 490 (FPLTPVQAAY…GLLRRLAQSP (422 aa)). The segment at 520-915 (FAERALLTPD…GREDDQVKIR (396 aa)) is adenylation. Residues 1407–1488 (APADELESAL…GLAERLRSAP (82 aa)) enclose the Carrier domain. The residue at position 1442 (Ser-1442) is an O-(pantetheine 4'-phosphoryl)serine. Positions 1584 to 1797 (LGRRYAEALH…FDCLGEALAQ (214 aa)) are thioesterase.

The protein belongs to the NRP synthetase family. Pantetheine 4'-phosphate serves as cofactor.

The catalysed reaction is holo-[peptidyl-carrier protein] + L-cysteine + ATP = L-cysteinyl-[peptidyl-carrier protein] + AMP + diphosphate. Its pathway is siderophore biosynthesis. Its function is as follows. Involved in the biosynthesis of the siderophore pyochelin. Adenylates L-cysteine and loads it onto its peptidyl carrier domain via a thioester linkage to the phosphopanthetheine moiety. Then forms a peptide bond between the salicyl-thiazolinyl intermediate bound to the second carrier domain of PchE and the cysteine bound to its own peptidyl carrier domain to form the salicyl-thiazolinyl-cysteinyl-S-PCP2 intermediate. It subsequently cyclizes the C-terminal cysteine to form the second thiazoline heterocycle in the salicyl-thiazolinyl-thiazolinyl-S-PCP2 intermediate. When this intermediate is released by the action of a thioesterase, it produces the tricyclic acid hydroxyphenyl-thiazolyl-thiazolinyl-carboxylic acid (HPTT-COOH), an advanced intermediate containing the aryl-4,2-bis-heterocyclic skeleton of the bithiazoline class of siderophores. The chain is Pyochelin synthetase PchF from Pseudomonas aeruginosa (strain UCBPP-PA14).